We begin with the raw amino-acid sequence, 149 residues long: SsrA-binding protein (149 aa).

It belongs to the SmpB family.

It is found in the cytoplasm. In terms of biological role, required for rescue of stalled ribosomes mediated by trans-translation. Binds to transfer-messenger RNA (tmRNA), required for stable association of tmRNA with ribosomes. tmRNA and SmpB together mimic tRNA shape, replacing the anticodon stem-loop with SmpB. tmRNA is encoded by the ssrA gene; the 2 termini fold to resemble tRNA(Ala) and it encodes a 'tag peptide', a short internal open reading frame. During trans-translation Ala-aminoacylated tmRNA acts like a tRNA, entering the A-site of stalled ribosomes, displacing the stalled mRNA. The ribosome then switches to translate the ORF on the tmRNA; the nascent peptide is terminated with the 'tag peptide' encoded by the tmRNA and targeted for degradation. The ribosome is freed to recommence translation, which seems to be the essential function of trans-translation. The protein is SsrA-binding protein of Mesoplasma florum (strain ATCC 33453 / NBRC 100688 / NCTC 11704 / L1) (Acholeplasma florum).